The following is a 139-amino-acid chain: Succinate dehydrogenase assembly factor 2, mitochondrial (139 aa).

Residues M1 to F28 constitute a mitochondrion transit peptide.

It belongs to the SDHAF2 family. In terms of assembly, interacts with the flavoprotein subunit within the SDH catalytic dimer.

The protein resides in the mitochondrion. The protein localises to the mitochondrion matrix. Plays an essential role in the assembly of succinate dehydrogenase (SDH), an enzyme complex (also referred to as respiratory complex II) that is a component of both the tricarboxylic acid (TCA) cycle and the mitochondrial electron transport chain, and which couples the oxidation of succinate to fumarate with the reduction of ubiquinone (coenzyme Q) to ubiquinol. Required for flavinylation (covalent attachment of FAD) of the flavoprotein subunit of the SDH catalytic dimer. In Schizosaccharomyces pombe (strain 972 / ATCC 24843) (Fission yeast), this protein is Succinate dehydrogenase assembly factor 2, mitochondrial.